The chain runs to 509 residues: ATP synthase subunit alpha (509 aa).

Gly169–Thr176 serves as a coordination point for ATP.

The protein belongs to the ATPase alpha/beta chains family. In terms of assembly, F-type ATPases have 2 components, CF(1) - the catalytic core - and CF(0) - the membrane proton channel. CF(1) has five subunits: alpha(3), beta(3), gamma(1), delta(1), epsilon(1). CF(0) has three main subunits: a(1), b(2) and c(9-12). The alpha and beta chains form an alternating ring which encloses part of the gamma chain. CF(1) is attached to CF(0) by a central stalk formed by the gamma and epsilon chains, while a peripheral stalk is formed by the delta and b chains.

It localises to the cell membrane. It catalyses the reaction ATP + H2O + 4 H(+)(in) = ADP + phosphate + 5 H(+)(out). Produces ATP from ADP in the presence of a proton gradient across the membrane. The alpha chain is a regulatory subunit. In Lacticaseibacillus casei (strain BL23) (Lactobacillus casei), this protein is ATP synthase subunit alpha.